A 450-amino-acid chain; its full sequence is MSMEFDAVIIGGGVSGCATFYTLSEYSSLKRVAIVEKCSKLAQISSSAKANSQTIHDGSIETNYTPEKAKKVRLSAYKTRQYALNKGLQNEVIFETQKMAIGVGDEECEFMKKRYESFKEIFVGLEEFDKQKIKELEPNVILGANGIDRHENIIGHGYRKDWSTMNFAKLSENFVEEALKLKPNNQVFLNFKVKKIEKRNDTYAVISEDAEEVYAKFVLVNAGSYALPLAQSMGYGLDLGCLPVAGSFYFVPDLLRGKVYTVQNPKLPFAAVHGDPDAVIKGKTRIGPTALTMPKLERNKCWLKGISLELLKMDLNRDVFKIAFDLMSDKEIRNYVFKNMVFELPIIGKRKFLKDAQKIIPTLSLEDLEYAHGFGEVRPQVLDRTKRKLELGEKKICTHKGITFNMTPSPGATSCLQNALVDSQEIAAYLGESFELERFYKDLSPEELEN.

It belongs to the MQO family. The cofactor is FAD.

It localises to the cell membrane. It carries out the reaction (S)-malate + a quinone = a quinol + oxaloacetate. It functions in the pathway carbohydrate metabolism; tricarboxylic acid cycle; oxaloacetate from (S)-malate (quinone route): step 1/1. Its function is as follows. Catalyzes oxidation of malate to oxaloacetate in the citric acid cycle. Donates electrons to quinones of the electron transfer chain. This chain is Malate:quinone oxidoreductase (mqo), found in Helicobacter pylori (strain J99 / ATCC 700824) (Campylobacter pylori J99).